A 1148-amino-acid polypeptide reads, in one-letter code: Alpha-mannosidase 2 (1148 aa).

Residues 1–5 (MKLSR) are Cytoplasmic-facing. The chain crosses the membrane as a helical; Signal-anchor for type II membrane protein span at residues 6 to 26 (QFTVFGSAIFCVVIFSLYLML). Topologically, residues 27–1148 (DRGHLDYPRG…EISTSRIRLR (1122 aa)) are lumenal. Residues S80 and S82 each carry the phosphoserine modification. The N-linked (GlcNAc...) asparagine glycan is linked to N93. Zn(2+) is bound by residues H174, D176, D288, and H568. D288 (nucleophile) is an active-site residue. The disordered stretch occupies residues 1121-1148 (MHSPPDAQNTSEVSLSPMEISTSRIRLR).

This sequence belongs to the glycosyl hydrolase 38 family. In terms of assembly, homodimer; disulfide-linked. Zn(2+) is required as a cofactor. Post-translationally, glycosylated. In terms of tissue distribution, liver.

The protein localises to the golgi apparatus membrane. The catalysed reaction is N(4)-{beta-D-GlcNAc-(1-&gt;2)-alpha-D-Man-(1-&gt;3)-[alpha-D-Man-(1-&gt;3)-[alpha-D-Man-(1-&gt;6)]-alpha-D-Man-(1-&gt;6)]-beta-D-Man-(1-&gt;4)-beta-D-GlcNAc-(1-&gt;4)-beta-D-GlcNAc}-L-asparaginyl-[protein] + 2 H2O = 2 alpha-D-mannopyranose + an N(4)-{beta-D-GlcNAc-(1-&gt;2)-alpha-D-Man-(1-&gt;3)-[alpha-D-Man-(1-&gt;6)]-beta-D-Man-(1-&gt;4)-beta-D-GlcNAc-(1-&gt;4)-beta-D-GlcNAc}-L-asparaginyl-[protein]. The protein operates within protein modification; protein glycosylation. With respect to regulation, inhibited by swainsonine. Its function is as follows. Catalyzes the first committed step in the biosynthesis of complex N-glycans. It controls conversion of high mannose to complex N-glycans; the final hydrolytic step in the N-glycan maturation pathway. The chain is Alpha-mannosidase 2 (Man2a1) from Rattus norvegicus (Rat).